Reading from the N-terminus, the 2485-residue chain is Probable polyketide synthase 10 (2485 aa).

Positions 8-447 (EDDIAIIGVG…GANCCIILSE (440 aa)) constitute a Ketosynthase family 3 (KS3) domain. Catalysis depends on for beta-ketoacyl synthase activity residues cysteine 184, histidine 325, and histidine 363. The interval 636–669 (GIEASFIVGHSLGEISAAHCSGMIDLETLCYIIY) is acyl/malonyl transferase. The active-site For acyl/malonyl transferase activity is serine 646. The interval 930 to 1054 (PPITILGNES…GNFHISNNLF (125 aa)) is N-terminal hotdog fold. The 291-residue stretch at 930-1220 (PPITILGNES…SKSLTPIQDP (291 aa)) folds into the PKS/mFAS DH domain. The Proton acceptor; for dehydratase activity role is filled by histidine 964. The tract at residues 1071-1220 (NYSLIERDDL…SKSLTPIQDP (150 aa)) is C-terminal hotdog fold. Aspartate 1134 (proton donor; for dehydratase activity) is an active-site residue. The 76-residue stretch at 2410 to 2485 (ESNKGIDGLL…NQLIKFLNKK (76 aa)) folds into the Carrier domain. The residue at position 2447 (serine 2447) is an O-(pantetheine 4'-phosphoryl)serine.

Requires pantetheine 4'-phosphate as cofactor.

Its function is as follows. Probable polyketide synthase. This chain is Probable polyketide synthase 10 (pks10), found in Dictyostelium discoideum (Social amoeba).